A 289-amino-acid polypeptide reads, in one-letter code: MVGVKPVGSDPDFQPELSGAGSRLAVVKFTMRGCGPCLRIAPAFSSMSNKYPQAVFLEVDVHQCQGTAATNNISATPTFLFFRNKVRIDQYQGADAVGLEEKIKQHLENDPGSNEDTDIPKGYMDLMPFINKAGCECLNESDEHGFDNCLRKDTTFLESDCDEQLLITVAFNQPVKLYSMKFQGPDNGQGPKYVKIFINLPRSMDFEEAERSEPTQALELTEDDIKEDGIVPLRYVKFQNVNSVTIFVQSNQGEEETTRISYFTFIGTPVQATNMNDFKRVVGKKGESH.

Residues 2-109 (VGVKPVGSDP…EEKIKQHLEN (108 aa)) enclose the Thioredoxin domain. A disulfide bridge connects residues C34 and C37. S113 bears the Phosphoserine mark. The PITH domain maps to 115–285 (EDTDIPKGYM…NDFKRVVGKK (171 aa)).

Component of the 19S regulatory cap of the 26S proteasome. Interacts with PSMD14/RPN11. Interacts with, and reduces EEF1A1. As to expression, ubiquitous.

It localises to the cytoplasm. Its subcellular location is the nucleus. Functionally, active thioredoxin with a redox potential of about -250 mV. This is Thioredoxin-like protein 1 (TXNL1) from Homo sapiens (Human).